The chain runs to 412 residues: Subtilisin-like protease 6 (412 aa).

Residues 1-20 (MGFITKAIPIVLAALSTVNG) form the signal peptide. The propeptide occupies 21-126 (AKILEAGPHA…VVRTSTNGTN (106 aa)). The 85-residue stretch at 36-120 (KYIVVMKREV…YIEPDFVVRT (85 aa)) folds into the Inhibitor I9 domain. N-linked (GlcNAc...) asparagine glycans are attached at residues Asn123 and Asn126. A Peptidase S8 domain is found at 135 to 412 (SWGLARVSSK…SKLIYNGSGK (278 aa)). Active-site charge relay system residues include Asp167 and His198. N-linked (GlcNAc...) asparagine glycans are attached at residues Asn252 and Asn264. Ser358 (charge relay system) is an active-site residue. The N-linked (GlcNAc...) asparagine glycan is linked to Asn408.

Belongs to the peptidase S8 family.

It is found in the secreted. Functionally, secreted subtilisin-like serine protease with keratinolytic activity that contributes to pathogenicity. The polypeptide is Subtilisin-like protease 6 (SUB6) (Trichophyton equinum (Horse ringworm fungus)).